We begin with the raw amino-acid sequence, 505 residues long: Histidine ammonia-lyase (505 aa).

Positions 141 to 143 form a cross-link, 5-imidazolinone (Ala-Gly); it reads ASG. 2,3-didehydroalanine (Ser) is present on serine 142.

It belongs to the PAL/histidase family. Contains an active site 4-methylidene-imidazol-5-one (MIO), which is formed autocatalytically by cyclization and dehydration of residues Ala-Ser-Gly.

Its subcellular location is the cytoplasm. The catalysed reaction is L-histidine = trans-urocanate + NH4(+). Its pathway is amino-acid degradation; L-histidine degradation into L-glutamate; N-formimidoyl-L-glutamate from L-histidine: step 1/3. This chain is Histidine ammonia-lyase, found in Bacillus cereus (strain G9842).